The following is a 473-amino-acid chain: Adenosylhomocysteinase (473 aa).

The substrate site is built by threonine 64, aspartate 139, and glutamate 199. NAD(+) is bound at residue 200 to 202 (TTT). The substrate site is built by lysine 229 and aspartate 233. NAD(+) is bound by residues asparagine 234, 263–268 (GYGDVG), glutamate 286, asparagine 321, 342–344 (IGH), and asparagine 387.

It belongs to the adenosylhomocysteinase family. The cofactor is NAD(+).

It is found in the cytoplasm. The enzyme catalyses S-adenosyl-L-homocysteine + H2O = L-homocysteine + adenosine. The protein operates within amino-acid biosynthesis; L-homocysteine biosynthesis; L-homocysteine from S-adenosyl-L-homocysteine: step 1/1. May play a key role in the regulation of the intracellular concentration of adenosylhomocysteine. In Paraburkholderia phymatum (strain DSM 17167 / CIP 108236 / LMG 21445 / STM815) (Burkholderia phymatum), this protein is Adenosylhomocysteinase.